The following is a 559-amino-acid chain: Sesquiterpene synthase (559 aa).

Mg(2+)-binding residues include Asp-312, Asp-316, and Glu-464. A DDXXD motif motif is present at residues 312-316; the sequence is DDIYD.

The protein belongs to the terpene synthase family. Tpsa subfamily. It depends on Mg(2+) as a cofactor. The cofactor is Mn(2+).

Functionally, catalyzes alpha-humulene and delta-cadinene, as well as beta-elemene, the thermal rearrangement product of germacrene A and several other bicyclic sesquiterpenes when incubated with (2E,6E)-farnesyl diphosphate. The protein is Sesquiterpene synthase of Santalum austrocaledonicum (Sandalwood).